The chain runs to 470 residues: Glutamate--tRNA ligase (470 aa).

The 'HIGH' region signature appears at 9–19 (PSPTGFLHVGG). The short motif at 236-240 (KLSKR) is the 'KMSKS' region element. Lysine 239 contributes to the ATP binding site.

The protein belongs to the class-I aminoacyl-tRNA synthetase family. Glutamate--tRNA ligase type 1 subfamily. In terms of assembly, monomer.

It is found in the cytoplasm. It carries out the reaction tRNA(Glu) + L-glutamate + ATP = L-glutamyl-tRNA(Glu) + AMP + diphosphate. Its function is as follows. Catalyzes the attachment of glutamate to tRNA(Glu) in a two-step reaction: glutamate is first activated by ATP to form Glu-AMP and then transferred to the acceptor end of tRNA(Glu). This chain is Glutamate--tRNA ligase, found in Psychromonas ingrahamii (strain DSM 17664 / CCUG 51855 / 37).